A 62-amino-acid polypeptide reads, in one-letter code: Fungus-induced protein 1 (62 aa).

Residues 1–22 form the signal peptide; that stretch reads MSQNLFQILLIFAILAALQVQG.

The protein is Fungus-induced protein 1 of Caenorhabditis briggsae.